A 144-amino-acid chain; its full sequence is Phosphomevalonate dehydratase small subunit (144 aa).

Residue serine 65 is the Proton acceptor of the active site.

This sequence belongs to the AcnX type II small subunit family. In terms of assembly, heterodimer composed of a large subunit (PMDh-L) and a small subunit (PMDh-S).

It catalyses the reaction (R)-5-phosphomevalonate = (2E)-3-methyl-5-phosphooxypent-2-enoate + H2O. The protein operates within isoprenoid biosynthesis; isopentenyl diphosphate biosynthesis via mevalonate pathway. In terms of biological role, component of a hydro-lyase that catalyzes the dehydration of mevalonate 5-phosphate (MVA5P) to form trans-anhydromevalonate 5-phosphate (tAHMP). Involved in the archaeal mevalonate (MVA) pathway, which provides fundamental precursors for isoprenoid biosynthesis, such as isopentenyl diphosphate (IPP) and dimethylallyl diphosphate (DMAPP). The protein is Phosphomevalonate dehydratase small subunit of Methanosarcina acetivorans (strain ATCC 35395 / DSM 2834 / JCM 12185 / C2A).